A 177-amino-acid polypeptide reads, in one-letter code: Large ribosomal subunit protein uL6 (177 aa).

Belongs to the universal ribosomal protein uL6 family. In terms of assembly, part of the 50S ribosomal subunit.

Functionally, this protein binds to the 23S rRNA, and is important in its secondary structure. It is located near the subunit interface in the base of the L7/L12 stalk, and near the tRNA binding site of the peptidyltransferase center. This is Large ribosomal subunit protein uL6 from Tolumonas auensis (strain DSM 9187 / NBRC 110442 / TA 4).